Reading from the N-terminus, the 154-residue chain is UPF0756 membrane protein CKR_1028 (154 aa).

The next 4 membrane-spanning stretches (helical) occupy residues 5–25, 48–68, 82–102, and 113–133; these read IILI…VALA, NGLF…IADG, WLGI…GLGM, and IMPA…GVPV.

It belongs to the UPF0756 family.

Its subcellular location is the cell membrane. This chain is UPF0756 membrane protein CKR_1028, found in Clostridium kluyveri (strain NBRC 12016).